The chain runs to 689 residues: Glycine--tRNA ligase beta subunit (689 aa).

Belongs to the class-II aminoacyl-tRNA synthetase family. In terms of assembly, tetramer of two alpha and two beta subunits.

The protein resides in the cytoplasm. It carries out the reaction tRNA(Gly) + glycine + ATP = glycyl-tRNA(Gly) + AMP + diphosphate. The sequence is that of Glycine--tRNA ligase beta subunit from Shewanella amazonensis (strain ATCC BAA-1098 / SB2B).